The primary structure comprises 187 residues: Elongation factor P (187 aa).

It belongs to the elongation factor P family.

The protein localises to the cytoplasm. Its pathway is protein biosynthesis; polypeptide chain elongation. Involved in peptide bond synthesis. Stimulates efficient translation and peptide-bond synthesis on native or reconstituted 70S ribosomes in vitro. Probably functions indirectly by altering the affinity of the ribosome for aminoacyl-tRNA, thus increasing their reactivity as acceptors for peptidyl transferase. This is Elongation factor P from Fusobacterium nucleatum subsp. nucleatum (strain ATCC 25586 / DSM 15643 / BCRC 10681 / CIP 101130 / JCM 8532 / KCTC 2640 / LMG 13131 / VPI 4355).